The sequence spans 397 residues: CCA-adding enzyme (397 aa).

ATP contacts are provided by Gly-32 and Arg-35. The CTP site is built by Gly-32 and Arg-35. Mg(2+) is bound by residues Asp-45 and Asp-47. ATP contacts are provided by Arg-116, Asp-159, Arg-162, Arg-165, and Arg-168. Arg-116, Asp-159, Arg-162, Arg-165, and Arg-168 together coordinate CTP.

The protein belongs to the tRNA nucleotidyltransferase/poly(A) polymerase family. Bacterial CCA-adding enzyme type 3 subfamily. Homodimer. The cofactor is Mg(2+).

The catalysed reaction is a tRNA precursor + 2 CTP + ATP = a tRNA with a 3' CCA end + 3 diphosphate. It carries out the reaction a tRNA with a 3' CCA end + 2 CTP + ATP = a tRNA with a 3' CCACCA end + 3 diphosphate. Functionally, catalyzes the addition and repair of the essential 3'-terminal CCA sequence in tRNAs without using a nucleic acid template. Adds these three nucleotides in the order of C, C, and A to the tRNA nucleotide-73, using CTP and ATP as substrates and producing inorganic pyrophosphate. tRNA 3'-terminal CCA addition is required both for tRNA processing and repair. Also involved in tRNA surveillance by mediating tandem CCA addition to generate a CCACCA at the 3' terminus of unstable tRNAs. While stable tRNAs receive only 3'-terminal CCA, unstable tRNAs are marked with CCACCA and rapidly degraded. In Latilactobacillus sakei subsp. sakei (strain 23K) (Lactobacillus sakei subsp. sakei), this protein is CCA-adding enzyme.